Consider the following 276-residue polypeptide: uncharacterized protein (276 aa).

In terms of domain architecture, AB hydrolase-1 spans 20 to 137; sequence PVLIFIPGAN…PPINTFLPDS (118 aa). The tract at residues 57–76 is disordered; it reads GESELTEPLPDSASNPDSDY.

This sequence belongs to the AB hydrolase superfamily.

This is an uncharacterized protein from Staphylococcus aureus (strain MW2).